Consider the following 425-residue polypeptide: Threonylcarbamoyladenosine tRNA methylthiotransferase (425 aa).

One can recognise a Radical SAM core domain in the interval 60–295 (RKNELIEVLS…RSYTRYTDER (236 aa)). Cys74, Cys78, and Cys81 together coordinate [4Fe-4S] cluster. One can recognise a TRAM domain in the interval 293-355 (DERIGELHRV…KFSMISKPAS (63 aa)). Residues 362 to 382 (PLSLMHLFPLAVFCLVLITLY) traverse the membrane as a helical segment.

Belongs to the methylthiotransferase family. CDKAL1 subfamily. [4Fe-4S] cluster is required as a cofactor.

The protein localises to the membrane. It carries out the reaction N(6)-L-threonylcarbamoyladenosine(37) in tRNA + (sulfur carrier)-SH + AH2 + 2 S-adenosyl-L-methionine = 2-methylsulfanyl-N(6)-L-threonylcarbamoyladenosine(37) in tRNA + (sulfur carrier)-H + 5'-deoxyadenosine + L-methionine + A + S-adenosyl-L-homocysteine + 2 H(+). Catalyzes the methylthiolation of N6-threonylcarbamoyladenosine (t(6)A), leading to the formation of 2-methylthio-N6-threonylcarbamoyladenosine (ms(2)t(6)A) at position 37 in tRNAs that read codons beginning with adenine. The sequence is that of Threonylcarbamoyladenosine tRNA methylthiotransferase from Caenorhabditis elegans.